The primary structure comprises 481 residues: Rho GTPase-activating protein 15 (481 aa).

Residues Ser51, Ser111, Ser204, Ser207, and Ser249 each carry the phosphoserine modification. One can recognise a PH domain in the interval 87–197; sequence MVEKEGYLQK…WFQAIKNAID (111 aa). Positions 287–476 constitute a Rho-GAP domain; sequence SHLHTVCERE…FMLTEYDKIF (190 aa).

The protein resides in the cytoplasm. Its subcellular location is the membrane. In terms of biological role, GTPase activator for the Rho-type GTPases by converting them to an inactive GDP-bound state. Has activity toward RAC1. Overexpression results in an increase in actin stress fibers and cell contraction. This Mus musculus (Mouse) protein is Rho GTPase-activating protein 15 (Arhgap15).